We begin with the raw amino-acid sequence, 106 residues long: Large ribosomal subunit protein uL24 (106 aa).

It belongs to the universal ribosomal protein uL24 family. As to quaternary structure, part of the 50S ribosomal subunit.

Functionally, one of two assembly initiator proteins, it binds directly to the 5'-end of the 23S rRNA, where it nucleates assembly of the 50S subunit. One of the proteins that surrounds the polypeptide exit tunnel on the outside of the subunit. This chain is Large ribosomal subunit protein uL24, found in Acidovorax sp. (strain JS42).